The following is a 269-amino-acid chain: 4-hydroxy-tetrahydrodipicolinate reductase (269 aa).

NAD(+) contacts are provided by residues 8 to 13 and Glu34; that span reads GAAGRM. NADP(+) is bound at residue Arg35. NAD(+) contacts are provided by residues 98–100 and 122–125; these read GTT and APNY. His155 serves as the catalytic Proton donor/acceptor. A (S)-2,3,4,5-tetrahydrodipicolinate-binding site is contributed by His156. The active-site Proton donor is the Lys159. (S)-2,3,4,5-tetrahydrodipicolinate is bound at residue 165–166; that stretch reads GT.

Belongs to the DapB family.

It is found in the cytoplasm. The catalysed reaction is (S)-2,3,4,5-tetrahydrodipicolinate + NAD(+) + H2O = (2S,4S)-4-hydroxy-2,3,4,5-tetrahydrodipicolinate + NADH + H(+). It carries out the reaction (S)-2,3,4,5-tetrahydrodipicolinate + NADP(+) + H2O = (2S,4S)-4-hydroxy-2,3,4,5-tetrahydrodipicolinate + NADPH + H(+). It functions in the pathway amino-acid biosynthesis; L-lysine biosynthesis via DAP pathway; (S)-tetrahydrodipicolinate from L-aspartate: step 4/4. Its function is as follows. Catalyzes the conversion of 4-hydroxy-tetrahydrodipicolinate (HTPA) to tetrahydrodipicolinate. The protein is 4-hydroxy-tetrahydrodipicolinate reductase of Vibrio campbellii (strain ATCC BAA-1116).